The sequence spans 316 residues: Aquaglyceroporin-2 (316 aa).

Residues 1 to 31 (MADERGPINKSGPSSTYGATENNGESGGTRG) form a disordered region. Topologically, residues 1–59 (MADERGPINKSGPSSTYGATENNGESGGTRGAPATEDVIVIQDSGWYYIKFRFKEPFAE) are cytoplasmic. Polar residues predominate over residues 11–24 (SGPSSTYGATENNG). The chain crosses the membrane as a helical span at residues 60 to 80 (FLGTFILVAFGVGAIAQTVLS). The Extracellular segment spans residues 81-86 (KGATGN). A helical membrane pass occupies residues 87–107 (WITIALGFGLGLALGIAVSGH). Residues 108 to 131 (YSGGHLNPAVTITLAIYRKFPWVK) lie on the Cytoplasmic side of the membrane. The NPA 1 motif lies at 114–116 (NPA). Residues 132–152 (VPVYITAQVLGAFVAAAVIYL) form a helical membrane-spanning segment. The Extracellular segment spans residues 153–187 (NYLPAIYNFAGDKRDVIGANATAGIFATYPQPFMS). Residue asparagine 172 is glycosylated (N-linked (GlcNAc...) asparagine). Residues 188-208 (IGGAFFSEALGTFFLLFVILA) form a helical membrane-spanning segment. Over 209-219 (MTDERNVPTTR) the chain is Cytoplasmic. The helical transmembrane segment at 220–240 (IVAPITIGLTLTAIAISLGFE) threads the bilayer. Residues 241–271 (TGFSLNAARDFGPRLFTFFIGYGVEVFTAYK) lie on the Extracellular side of the membrane. An NPA 2 motif is present at residues 246–248 (NAA). Residues 272 to 292 (FYFWIPLVAPIVGGLVAGFVY) form a helical membrane-spanning segment. Residues 293-316 (DSLLYWGEKSFLNKNVHHEHRAVA) are Cytoplasmic-facing.

Belongs to the MIP/aquaporin (TC 1.A.8) family.

Its subcellular location is the cell membrane. It localises to the membrane. The enzyme catalyses H2O(in) = H2O(out). It carries out the reaction glycerol(in) = glycerol(out). Its activity is regulated as follows. Polyethylene glycol (PEG) stimulates whereas glycerol inhibits the aquaporin activity. Water channel required to facilitate the transport of water across membranes. Stimulates plant drought tolerance by facilitating the transport of water from the arbuscular mycorrhiza fungus to host plants. This Rhizophagus irregularis (Arbuscular mycorrhizal fungus) protein is Aquaglyceroporin-2.